Reading from the N-terminus, the 479-residue chain is M-phase inducer phosphatase (479 aa).

A disordered region spans residues 182–218 (MTESNTNSTTTPPPKTPETARDCFKRPEPPASANCSP). The span at 199–209 (ETARDCFKRPE) shows a compositional bias: basic and acidic residues. In terms of domain architecture, Rhodanese spans 316–432 (KVASYRIIDC…FFESHVELCE (117 aa)). C379 is an active-site residue. Residue S455 is modified to Phosphoserine.

It belongs to the MPI phosphatase family.

The enzyme catalyses O-phospho-L-tyrosyl-[protein] + H2O = L-tyrosyl-[protein] + phosphate. Functionally, this protein functions as a dosage-dependent inducer in mitotic control. It is a tyrosine protein phosphatase required for progression of the cell cycle. It may directly dephosphorylate Cdk1 and activate the Cdk1 activity. This chain is M-phase inducer phosphatase (stg), found in Drosophila melanogaster (Fruit fly).